The primary structure comprises 556 residues: Formate--tetrahydrofolate ligase 1 (556 aa).

Residue T65–S72 participates in ATP binding.

This sequence belongs to the formate--tetrahydrofolate ligase family.

The enzyme catalyses (6S)-5,6,7,8-tetrahydrofolate + formate + ATP = (6R)-10-formyltetrahydrofolate + ADP + phosphate. Its pathway is one-carbon metabolism; tetrahydrofolate interconversion. The sequence is that of Formate--tetrahydrofolate ligase 1 from Streptococcus pyogenes serotype M18 (strain MGAS8232).